We begin with the raw amino-acid sequence, 365 residues long: NAD(P)H-quinone oxidoreductase subunit 1, chloroplastic (365 aa).

6 consecutive transmembrane segments (helical) span residues 30–50 (LVPI…IVWL), 104–124 (IAVI…HFVL), 129–149 (IGVF…LMSG), 253–273 (FGLF…FVAV), 302–322 (VFGT…FLFI), and 338–358 (LLNL…LLTT).

It belongs to the complex I subunit 1 family. As to quaternary structure, NDH is composed of at least 16 different subunits, 5 of which are encoded in the nucleus.

The protein resides in the plastid. Its subcellular location is the chloroplast thylakoid membrane. The catalysed reaction is a plastoquinone + NADH + (n+1) H(+)(in) = a plastoquinol + NAD(+) + n H(+)(out). The enzyme catalyses a plastoquinone + NADPH + (n+1) H(+)(in) = a plastoquinol + NADP(+) + n H(+)(out). Functionally, NDH shuttles electrons from NAD(P)H:plastoquinone, via FMN and iron-sulfur (Fe-S) centers, to quinones in the photosynthetic chain and possibly in a chloroplast respiratory chain. The immediate electron acceptor for the enzyme in this species is believed to be plastoquinone. Couples the redox reaction to proton translocation, and thus conserves the redox energy in a proton gradient. This chain is NAD(P)H-quinone oxidoreductase subunit 1, chloroplastic, found in Populus trichocarpa (Western balsam poplar).